Reading from the N-terminus, the 450-residue chain is Probable transporter MCH1 (450 aa).

Helical transmembrane passes span 32–52 (AFLVALCACIPAGFISQISLY), 69–89 (VLFSAVNLGGYITPPLLGLLS), 96–116 (MLSWLSFVGFVPTYAYAAWVF), 127–147 (VLCFTLIGISTNALYFSALFT), 157–177 (LCSISLPATFYGMASVLGSQL), 199–219 (LAVAYTLISFCMWFATSIVTM), 255–275 (PAAYFMALVLLLSLGPMEMFL), 290–309 (VLPEFAIASTCSRFLSGLII), 320–340 (MSVQWAVLLLGVVGQWIVVLA), 355–375 (LSGACYGGLFTVSPILTLAVW), 378–398 (AVFGTAYGSFMITPAVGSILF), and 423–443 (VFWSSTSALAIALLFSVLMYL).

This sequence belongs to the major facilitator superfamily.

The protein resides in the vacuole membrane. Its function is as follows. Probable transporter. In Eremothecium gossypii (strain ATCC 10895 / CBS 109.51 / FGSC 9923 / NRRL Y-1056) (Yeast), this protein is Probable transporter MCH1 (MCH1).